Reading from the N-terminus, the 252-residue chain is ATP synthase subunit a (252 aa).

5 consecutive transmembrane segments (helical) span residues 33–53 (GQVF…AFVA), 92–112 (VPFV…GALV), 130–150 (DINT…YAGL), 196–216 (LVVS…VMVL), and 217–237 (GLFT…TYIG).

The protein belongs to the ATPase A chain family. In terms of assembly, F-type ATPases have 2 components, CF(1) - the catalytic core - and CF(0) - the membrane proton channel. CF(1) has five subunits: alpha(3), beta(3), gamma(1), delta(1), epsilon(1). CF(0) has four main subunits: a, b, b' and c.

The protein resides in the cellular thylakoid membrane. In terms of biological role, key component of the proton channel; it plays a direct role in the translocation of protons across the membrane. The chain is ATP synthase subunit a from Thermosynechococcus vestitus (strain NIES-2133 / IAM M-273 / BP-1).